The following is a 747-amino-acid chain: Protein tyrosine phosphatase domain-containing protein 1 (747 aa).

The tract at residues 1-36 (MAAGVLPQNEDPYSTLVNSSGHAAHMDENSGRPAPK) is disordered. Residues 11-21 (DPYSTLVNSSG) show a composition bias toward polar residues. One can recognise a Tyrosine-protein phosphatase domain in the interval 82 to 253 (YSSWVTDNIL…LAPLRNIFSC (172 aa)). C190 serves as the catalytic Phosphocysteine intermediate. 3 positions are modified to phosphoserine: S392, S394, and S543. Residues 549-570 (SSPKAQFPHGQETQDSTDLSEA) are disordered.

This sequence belongs to the protein-tyrosine phosphatase family. Non-receptor class PTPDC1 subfamily.

Functionally, may play roles in cilia formation and/or maintenance. The polypeptide is Protein tyrosine phosphatase domain-containing protein 1 (Ptpdc1) (Mus musculus (Mouse)).